The sequence spans 142 residues: Large ribosomal subunit protein uL11 (142 aa).

Belongs to the universal ribosomal protein uL11 family. As to quaternary structure, part of the ribosomal stalk of the 50S ribosomal subunit. Interacts with L10 and the large rRNA to form the base of the stalk. L10 forms an elongated spine to which L12 dimers bind in a sequential fashion forming a multimeric L10(L12)X complex. One or more lysine residues are methylated.

Functionally, forms part of the ribosomal stalk which helps the ribosome interact with GTP-bound translation factors. The protein is Large ribosomal subunit protein uL11 of Thermobifida fusca (strain YX).